The chain runs to 62 residues: uncharacterized protein (62 aa).

Its subcellular location is the plastid. The protein resides in the chloroplast. This is an uncharacterized protein from Porphyra purpurea (Red seaweed).